The following is a 503-amino-acid chain: Aminoaldehyde dehydrogenase 2, peroxisomal (503 aa).

Na(+) contacts are provided by Ile-28, Asp-99, and Leu-189. Residue 238-245 (GSTMTGSK) participates in NAD(+) binding. Catalysis depends on Glu-260, which acts as the Proton acceptor. NAD(+)-binding residues include Cys-294 and Glu-393. Cys-294 acts as the Nucleophile in catalysis. The Microbody targeting signal signature appears at 501-503 (SKL).

The protein belongs to the aldehyde dehydrogenase family. In terms of tissue distribution, expressed in leaves, flowers and fruits.

The protein localises to the peroxisome. It carries out the reaction 4-aminobutanal + NAD(+) + H2O = 4-aminobutanoate + NADH + 2 H(+). The catalysed reaction is 3-aminopropanal + NAD(+) + H2O = beta-alanine + NADH + 2 H(+). It participates in amine and polyamine biosynthesis; betaine biosynthesis via choline pathway; betaine from betaine aldehyde: step 1/1. Dehydrogenase that catalyzes the oxidation of several aminoaldehydes. Metabolizes and detoxifies aldehyde products of polyamine degradation to non-toxic amino acids. Catalyzes the oxidation of 4-aminobutanal and 3-aminopropanal to 4-aminobutanoate and beta-alanine, respectively. The chain is Aminoaldehyde dehydrogenase 2, peroxisomal from Malus domestica (Apple).